The chain runs to 156 residues: Transcription antitermination protein NusB (156 aa).

It belongs to the NusB family.

In terms of biological role, involved in transcription antitermination. Required for transcription of ribosomal RNA (rRNA) genes. Binds specifically to the boxA antiterminator sequence of the ribosomal RNA (rrn) operons. The chain is Transcription antitermination protein NusB from Mycolicibacterium paratuberculosis (strain ATCC BAA-968 / K-10) (Mycobacterium paratuberculosis).